The following is a 320-amino-acid chain: Mitochondrial thiamine pyrophosphate carrier 1 (320 aa).

Solcar repeat units follow at residues 12 to 110, 119 to 205, and 213 to 308; these read GTRR…TTQA, PQPV…LRPS, and PFGS…TLRA. Helical transmembrane passes span 17-35, 91-107, 125-145, 180-197, 219-239, and 283-300; these read VVLA…VAPL, LMYV…YRTT, FVAG…LDLL, GCSA…LFFA, ALAG…LDLV, and GLTV…VTMW.

This sequence belongs to the mitochondrial carrier (TC 2.A.29) family.

The protein localises to the mitochondrion inner membrane. In terms of biological role, mitochondrial transporter that mediates uptake of thiamine pyrophosphate (ThPP) into mitochondria. The protein is Mitochondrial thiamine pyrophosphate carrier 1 (tpc1) of Aspergillus terreus (strain NIH 2624 / FGSC A1156).